The chain runs to 123 residues: Defensin beta 118 (123 aa).

An N-terminal signal peptide occupies residues 1–19 (MKLLLLALPMLVLLPQVIP). Disulfide bonds link C27/C54, C34/C48, and C38/C55. Residues 65–123 (VPTTSPTPLSDSTRGVIDDILTVRFTTDYFEVSSKKNMVEESEVGQGTQTSLPNVHHSS) constitute a propeptide that is removed on maturation. Residues 100–123 (KNMVEESEVGQGTQTSLPNVHHSS) form a disordered region. Residues 109-123 (GQGTQTSLPNVHHSS) are compositionally biased toward polar residues.

It belongs to the beta-defensin family. In terms of processing, the three-dimensional structure formed by the three intramolecular disulfide bridges is indispensable for antimicrobial activity.

It is found in the secreted. Its function is as follows. Host defense peptide that exhibits antimicrobial activity against both Gram-negative bacteria, such as E.coli and S.typhimurium, and Gram-positive bacteria, such as S.aureus and B.subtilis. Inhibits cell adhesion of E.coli on intestinal epithelial enterocytes. Causes rapid permeabilization of both the outer and inner membrane of E.coli, leading to morphological alterations on the bacterial surface. Binds to bacterial lipopolysaccharides (LPS) with high affinity, and may thereby be involved in immunoregulation through LPS neutralization. May contribute to epididymal innate immunity and protect the sperm against attack by microorganisms. In Pongo pygmaeus (Bornean orangutan), this protein is Defensin beta 118 (DEFB118).